A 900-amino-acid chain; its full sequence is DNA mismatch repair protein MutS (900 aa).

637–644 (GPNMAGKS) lines the ATP pocket.

It belongs to the DNA mismatch repair MutS family.

This protein is involved in the repair of mismatches in DNA. It is possible that it carries out the mismatch recognition step. This protein has a weak ATPase activity. This Methanosarcina acetivorans (strain ATCC 35395 / DSM 2834 / JCM 12185 / C2A) protein is DNA mismatch repair protein MutS.